Consider the following 528-residue polypeptide: Protein spinster homolog 1 (528 aa).

A disordered region spans residues 1 to 38 (MAGSDTAPFLSQADDPDDGPAPGHPGLPGPMGNPKSGE). Alanine 2 is subject to N-acetylalanine. 12 helical membrane-spanning segments follow: residues 60–80 (LIVV…FTVA), 98–118 (GLIQ…FGYL), 126–146 (YLMC…SFIP), 160–180 (VGVG…DLFV), 187–207 (MLSI…IAGS), 218–238 (WALR…FLVV), 278–298 (LGFT…PAFL), 323–343 (LIFG…GVEI), 357–377 (LVCA…LACA), 381–401 (IVAT…NWAI), 421–441 (FQIV…IGLI), and 465–485 (MLCA…AMFI). Serine 518 is subject to Phosphoserine.

It belongs to the major facilitator superfamily. Spinster (TC 2.A.1.49) family. As to quaternary structure, interacts with BCL2 and BCL2L1. As to expression, expressed in liver (at mRNA and protein levels).

The protein resides in the lysosome membrane. The enzyme catalyses a 1-acyl-sn-glycero-3-phosphocholine(out) + H(+)(out) = a 1-acyl-sn-glycero-3-phosphocholine(in) + H(+)(in). The catalysed reaction is 1-hexadecanoyl-sn-glycero-3-phosphocholine(out) + H(+)(out) = 1-hexadecanoyl-sn-glycero-3-phosphocholine(in) + H(+)(in). It carries out the reaction 1-(9Z-octadecenoyl)-sn-glycero-3-phosphocholine(out) + H(+)(out) = 1-(9Z-octadecenoyl)-sn-glycero-3-phosphocholine(in) + H(+)(in). It catalyses the reaction 1-(5Z,8Z,11Z,14Z-eicosatetraenoyl)-sn-glycero-3-phosphocholine(out) + H(+)(out) = 1-(5Z,8Z,11Z,14Z-eicosatetraenoyl)-sn-glycero-3-phosphocholine(in) + H(+)(in). The enzyme catalyses 1-(4Z,7Z,10Z,13Z,16Z,19Z-docosahexaenoyl)-sn-glycero-3-phosphocholine(out) + H(+)(out) = 1-(4Z,7Z,10Z,13Z,16Z,19Z-docosahexaenoyl)-sn-glycero-3-phosphocholine(in) + H(+)(in). The catalysed reaction is a 1-acyl-sn-glycero-3-phosphoethanolamine(out) + H(+)(out) = a 1-acyl-sn-glycero-3-phosphoethanolamine(in) + H(+)(in). It carries out the reaction 1-(9Z-octadecenoyl)-sn-glycero-3-phosphoethanolamine(out) + H(+)(out) = 1-(9Z-octadecenoyl)-sn-glycero-3-phosphoethanolamine(in) + H(+)(in). It catalyses the reaction 1-acyl-sn-glycero-3-phospho-(1'-sn-glycerol)(out) + H(+)(out) = 1-acyl-sn-glycero-3-phospho-(1'-sn-glycerol)(in) + H(+)(in). The enzyme catalyses 1-(9Z-octadecenoyl)-sn-glycero-3-phospho-(1'-sn-glycerol)(out) + H(+)(out) = 1-(9Z-octadecenoyl)-sn-glycero-3-phospho-(1'-sn-glycerol)(in) + H(+)(in). The catalysed reaction is a 1-O-(1Z-alkenyl)-sn-glycero-3-phosphocholine(out) + H(+)(out) = a 1-O-(1Z-alkenyl)-sn-glycero-3-phosphocholine(in) + H(+)(in). It carries out the reaction 1-(1Z-hexadecenyl)-sn-glycero-3-phosphocholine(out) + H(+)(out) = 1-(1Z-hexadecenyl)-sn-glycero-3-phosphocholine(in) + H(+)(in). It catalyses the reaction a 1-O-(1Z-alkenyl)-sn-glycero-3-phosphoethanolamine(out) + H(+)(out) = a 1-O-(1Z-alkenyl)-sn-glycero-3-phosphoethanolamine(in) + H(+)(in). The enzyme catalyses 1-O-(1Z-hexadecenyl)-sn-glycero-3-phosphoethanolamine(out) + H(+)(out) = 1-O-(1Z-hexadecenyl)-sn-glycero-3-phosphoethanolamine(in) + H(+)(in). Its function is as follows. Plays a critical role in the phospholipid salvage pathway from lysosomes to the cytosol. Mediates the rate-limiting, proton-dependent, lysosomal efflux of lysophospholipids, which can then be reacylated by acyltransferases in the endoplasmic reticulum to form phospholipids. Selective for zwitterionic headgroups such as lysophosphatidylcholine (LPC) and lysophosphatidylethanolamine (LPE), can also transport lysophosphatidylglycerol (LPG), but not other anionic lysophospholipids, sphingosine, nor sphingomyelin. Transports lysophospholipids with saturated, monounsaturated, and polyunsaturated fatty acids, such as 1-hexadecanoyl-sn-glycero-3-phosphocholine, 1-(9Z-octadecenoyl)-sn-glycero-3-phosphocholine and 1-(4Z,7Z,10Z,13Z,16Z,19Z-docosahexaenoyl)-sn-glycero-3-phosphocholine, respectively. Can also transport lysoplasmalogen (LPC with a fatty alcohol) such as 1-(1Z-hexadecenyl)-sn-glycero-3-phosphocholine. Essential player in lysosomal homeostasis. Crucial for cell survival under conditions of nutrient limitation. May be involved in necrotic or autophagic cell death. The sequence is that of Protein spinster homolog 1 (Spns1) from Mus musculus (Mouse).